The sequence spans 1131 residues: DNA polymerase II large subunit (1131 aa).

This sequence belongs to the archaeal DNA polymerase II family. In terms of assembly, heterodimer of a large subunit and a small subunit.

It carries out the reaction DNA(n) + a 2'-deoxyribonucleoside 5'-triphosphate = DNA(n+1) + diphosphate. It catalyses the reaction Exonucleolytic cleavage in the 3'- to 5'-direction to yield nucleoside 5'-phosphates.. Functionally, possesses two activities: a DNA synthesis (polymerase) and an exonucleolytic activity that degrades single-stranded DNA in the 3'- to 5'-direction. Has a template-primer preference which is characteristic of a replicative DNA polymerase. The polypeptide is DNA polymerase II large subunit (Methanococcus maripaludis (strain C7 / ATCC BAA-1331)).